The chain runs to 124 residues: Large ribosomal subunit protein bL12 (124 aa).

The protein belongs to the bacterial ribosomal protein bL12 family. In terms of assembly, homodimer. Part of the ribosomal stalk of the 50S ribosomal subunit. Forms a multimeric L10(L12)X complex, where L10 forms an elongated spine to which 2 to 4 L12 dimers bind in a sequential fashion. Binds GTP-bound translation factors.

In terms of biological role, forms part of the ribosomal stalk which helps the ribosome interact with GTP-bound translation factors. Is thus essential for accurate translation. The chain is Large ribosomal subunit protein bL12 from Herminiimonas arsenicoxydans.